Here is a 332-residue protein sequence, read N- to C-terminus: Abl interactor homolog (332 aa).

Residues 73–104 (HITSLLQLQTNEMEKLNIEIQTLTQRVRMIHD) adopt a coiled-coil conformation. A disordered region spans residues 152-332 (SDINQNGVPP…NDFPPPPPPM (181 aa)). Over residues 164–206 (NHSNSSANLTSSSGHLAASSTSNSSTPSYQSPSYSSQPTISSG) the composition is skewed to low complexity. Residues 221–247 (APPPPSLSVPAAPPPPVMNVPPPPPTS) are compositionally biased toward pro residues. A compositionally biased stretch (polar residues) spans 248 to 257 (QRPSSVNNNA). Positions 277–314 (LPPPPSFGLPPPPTLGDDFPPPPPPPVGSYDFPPPPAR) are enriched in pro residues.

The protein belongs to the ABI family. As to quaternary structure, part of a Scar/WAVE complex containing brk1, scrA, abiA, pirA and napA. Interacts with scrA.

Functionally, involved in regulation of actin and microtubule organization. Required for proper cytokinesis. This is Abl interactor homolog (abiA) from Dictyostelium discoideum (Social amoeba).